Reading from the N-terminus, the 521-residue chain is Phomenoic acid biosynthesis cluster-specific transcriptional regulator (521 aa).

The zn(2)-C6 fungal-type DNA-binding region spans 46 to 76; that stretch reads HCWQCRRSCVVCDFTQPGCQRCSAAGVSCPG.

Its subcellular location is the nucleus. Functionally, transcriptional regulator; part of the gene cluster that mediates the biosynthesis of phomenoic acid, a long chain aliphatic carboxylic acid that does not appear to be essential for pathogenicity but may play a role in allowing to outcompete other fungi in the environmental niche via its antifungal properties. Positively regulates the expression of the cluster and subsequent production of phomenoic acid. The chain is Phomenoic acid biosynthesis cluster-specific transcriptional regulator from Leptosphaeria maculans (strain JN3 / isolate v23.1.3 / race Av1-4-5-6-7-8) (Blackleg fungus).